Consider the following 412-residue polypeptide: Subtilisin-like protease 6 (412 aa).

Residues 1–20 form the signal peptide; the sequence is MGFITKAIPIVLAALSTVNG. Residues 21-127 constitute a propeptide that is removed on maturation; the sequence is ARILEAGPHA…VRATTNGTNL (107 aa). An Inhibitor I9 domain is found at 36–120; sequence KYIVVMKKDV…FIEPDFVVRA (85 aa). N-linked (GlcNAc...) asparagine glycans are attached at residues N123 and N126. Residues 135–412 enclose the Peptidase S8 domain; the sequence is SWGLARVSTR…SKLIYNGSGK (278 aa). Active-site charge relay system residues include D167 and H198. N-linked (GlcNAc...) asparagine glycans are attached at residues N252, N264, and N325. S358 functions as the Charge relay system in the catalytic mechanism. N-linked (GlcNAc...) asparagine glycosylation is present at N408.

The protein belongs to the peptidase S8 family.

Its subcellular location is the secreted. In terms of biological role, secreted subtilisin-like serine protease with keratinolytic activity that contributes to pathogenicity. This is Subtilisin-like protease 6 (SUB6) from Trichophyton verrucosum (Cattle ringworm fungus).